Reading from the N-terminus, the 487-residue chain is GTPase Der (487 aa).

EngA-type G domains are found at residues 3–166 and 193–366; these read PVIA…PRDA and IKIA…QSAV. GTP contacts are provided by residues 9 to 16, 56 to 60, 118 to 121, 199 to 206, 246 to 250, and 311 to 314; these read GRPNVGKS, DTGGI, NKID, DTAGV, and NKWD. A KH-like domain is found at 367–451; it reads TRWPTSRLTQ…PIRIEYKGGE (85 aa). The span at 448–461 shows a compositional bias: basic and acidic residues; that stretch reads KGGENPYEGKKNTL. The tract at residues 448-487 is disordered; that stretch reads KGGENPYEGKKNTLTDRQVNKKRRLMSHHKKAEKKRRDKR. The span at 467 to 487 shows a compositional bias: basic residues; that stretch reads NKKRRLMSHHKKAEKKRRDKR.

It belongs to the TRAFAC class TrmE-Era-EngA-EngB-Septin-like GTPase superfamily. EngA (Der) GTPase family. As to quaternary structure, associates with the 50S ribosomal subunit.

Its function is as follows. GTPase that plays an essential role in the late steps of ribosome biogenesis. This is GTPase Der from Pseudomonas putida (strain ATCC 700007 / DSM 6899 / JCM 31910 / BCRC 17059 / LMG 24140 / F1).